Here is a 223-residue protein sequence, read N- to C-terminus: Phosphoribosylformylglycinamidine synthase subunit PurQ (223 aa).

The 220-residue stretch at 4 to 223 folds into the Glutamine amidotransferase type-1 domain; that stretch reads FAVVVFPGTN…FKGMVEWVRS (220 aa). The active-site Nucleophile is the C85. Residues H196 and E198 contribute to the active site.

As to quaternary structure, part of the FGAM synthase complex composed of 1 PurL, 1 PurQ and 2 PurS subunits.

Its subcellular location is the cytoplasm. It catalyses the reaction N(2)-formyl-N(1)-(5-phospho-beta-D-ribosyl)glycinamide + L-glutamine + ATP + H2O = 2-formamido-N(1)-(5-O-phospho-beta-D-ribosyl)acetamidine + L-glutamate + ADP + phosphate + H(+). The enzyme catalyses L-glutamine + H2O = L-glutamate + NH4(+). Its pathway is purine metabolism; IMP biosynthesis via de novo pathway; 5-amino-1-(5-phospho-D-ribosyl)imidazole from N(2)-formyl-N(1)-(5-phospho-D-ribosyl)glycinamide: step 1/2. In terms of biological role, part of the phosphoribosylformylglycinamidine synthase complex involved in the purines biosynthetic pathway. Catalyzes the ATP-dependent conversion of formylglycinamide ribonucleotide (FGAR) and glutamine to yield formylglycinamidine ribonucleotide (FGAM) and glutamate. The FGAM synthase complex is composed of three subunits. PurQ produces an ammonia molecule by converting glutamine to glutamate. PurL transfers the ammonia molecule to FGAR to form FGAM in an ATP-dependent manner. PurS interacts with PurQ and PurL and is thought to assist in the transfer of the ammonia molecule from PurQ to PurL. This is Phosphoribosylformylglycinamidine synthase subunit PurQ from Pyrococcus furiosus (strain ATCC 43587 / DSM 3638 / JCM 8422 / Vc1).